The following is a 72-amino-acid chain: Cytochrome c oxidase subunit 2 (72 aa).

Over Met1 to Ser14 the chain is Mitochondrial intermembrane. The helical transmembrane segment at Pro15–Met45 threads the bilayer. The Mitochondrial matrix segment spans residues Val46–Ile72.

It belongs to the cytochrome c oxidase subunit 2 family. Component of the cytochrome c oxidase (complex IV, CIV), a multisubunit enzyme composed of 14 subunits. The complex is composed of a catalytic core of 3 subunits MT-CO1, MT-CO2 and MT-CO3, encoded in the mitochondrial DNA, and 11 supernumerary subunits COX4I, COX5A, COX5B, COX6A, COX6B, COX6C, COX7A, COX7B, COX7C, COX8 and NDUFA4, which are encoded in the nuclear genome. The complex exists as a monomer or a dimer and forms supercomplexes (SCs) in the inner mitochondrial membrane with NADH-ubiquinone oxidoreductase (complex I, CI) and ubiquinol-cytochrome c oxidoreductase (cytochrome b-c1 complex, complex III, CIII), resulting in different assemblies (supercomplex SCI(1)III(2)IV(1) and megacomplex MCI(2)III(2)IV(2)). Found in a complex with TMEM177, COA6, COX18, COX20, SCO1 and SCO2. Interacts with TMEM177 in a COX20-dependent manner. Interacts with COX20. Interacts with COX16. Requires Cu cation as cofactor.

The protein localises to the mitochondrion inner membrane. The enzyme catalyses 4 Fe(II)-[cytochrome c] + O2 + 8 H(+)(in) = 4 Fe(III)-[cytochrome c] + 2 H2O + 4 H(+)(out). Its function is as follows. Component of the cytochrome c oxidase, the last enzyme in the mitochondrial electron transport chain which drives oxidative phosphorylation. The respiratory chain contains 3 multisubunit complexes succinate dehydrogenase (complex II, CII), ubiquinol-cytochrome c oxidoreductase (cytochrome b-c1 complex, complex III, CIII) and cytochrome c oxidase (complex IV, CIV), that cooperate to transfer electrons derived from NADH and succinate to molecular oxygen, creating an electrochemical gradient over the inner membrane that drives transmembrane transport and the ATP synthase. Cytochrome c oxidase is the component of the respiratory chain that catalyzes the reduction of oxygen to water. Electrons originating from reduced cytochrome c in the intermembrane space (IMS) are transferred via the dinuclear copper A center (CU(A)) of subunit 2 and heme A of subunit 1 to the active site in subunit 1, a binuclear center (BNC) formed by heme A3 and copper B (CU(B)). The BNC reduces molecular oxygen to 2 water molecules using 4 electrons from cytochrome c in the IMS and 4 protons from the mitochondrial matrix. This Atractosteus spatula (Alligator gar) protein is Cytochrome c oxidase subunit 2 (mt-co2).